Consider the following 577-residue polypeptide: Pyruvate decarboxylase (577 aa).

Residues Asp30 and His116 each contribute to the substrate site. A thiamine pyrophosphate binding region spans residues 388-482 (TPGYGVNDFI…FLINNDGYTI (95 aa)). Mg(2+) is bound by residues Asp450, Asn477, and Gly479. Residue Glu483 coordinates substrate.

Belongs to the TPP enzyme family. As to quaternary structure, homotetramer. The cofactor is a metal cation. Thiamine diphosphate is required as a cofactor.

The enzyme catalyses a 2-oxocarboxylate + H(+) = an aldehyde + CO2. This is Pyruvate decarboxylase (pdcA) from Aspergillus parasiticus.